The following is a 202-amino-acid chain: FMN-dependent NADH:quinone oxidoreductase (202 aa).

Residues S9, 15-17 (SVS), 95-98 (MYNF), and 139-142 (SRGG) contribute to the FMN site.

It belongs to the azoreductase type 1 family. As to quaternary structure, homodimer. The cofactor is FMN.

It catalyses the reaction 2 a quinone + NADH + H(+) = 2 a 1,4-benzosemiquinone + NAD(+). The enzyme catalyses N,N-dimethyl-1,4-phenylenediamine + anthranilate + 2 NAD(+) = 2-(4-dimethylaminophenyl)diazenylbenzoate + 2 NADH + 2 H(+). Functionally, quinone reductase that provides resistance to thiol-specific stress caused by electrophilic quinones. In terms of biological role, also exhibits azoreductase activity. Catalyzes the reductive cleavage of the azo bond in aromatic azo compounds to the corresponding amines. This Laribacter hongkongensis (strain HLHK9) protein is FMN-dependent NADH:quinone oxidoreductase.